Consider the following 597-residue polypeptide: Aspartate--tRNA ligase (597 aa).

Glu-173 is an L-aspartate binding site. Residues 197 to 200 (QLFK) are aspartate. Residue Arg-219 participates in L-aspartate binding. ATP contacts are provided by residues 219 to 221 (RDE) and Gln-228. An L-aspartate-binding site is contributed by His-449. An ATP-binding site is contributed by Glu-483. Position 490 (Arg-490) interacts with L-aspartate. ATP is bound at residue 535 to 538 (GLDR).

This sequence belongs to the class-II aminoacyl-tRNA synthetase family. Type 1 subfamily. As to quaternary structure, homodimer.

It localises to the cytoplasm. The enzyme catalyses tRNA(Asp) + L-aspartate + ATP = L-aspartyl-tRNA(Asp) + AMP + diphosphate. Functionally, catalyzes the attachment of L-aspartate to tRNA(Asp) in a two-step reaction: L-aspartate is first activated by ATP to form Asp-AMP and then transferred to the acceptor end of tRNA(Asp). The protein is Aspartate--tRNA ligase of Shewanella pealeana (strain ATCC 700345 / ANG-SQ1).